The following is a 914-amino-acid chain: Ral guanine nucleotide dissociation stimulator (914 aa).

Residues lysine 112 to glutamate 249 form the N-terminal Ras-GEF domain. Residues alanine 280 to tryptophan 365 are disordered. Over residues alanine 282 to alanine 300 the composition is skewed to pro residues. Positions glutamate 304–alanine 338 are enriched in low complexity. In terms of domain architecture, Ras-GEF spans proline 386–proline 648. Disordered stretches follow at residues lysine 666–cysteine 689 and proline 728–lysine 776. Composition is skewed to low complexity over residues serine 675–serine 686 and serine 745–threonine 772. One can recognise a Ras-associating domain in the interval aspartate 798 to phenylalanine 885. Tyrosine 814 is modified (phosphotyrosine; by MET).

In terms of assembly, interacts with RIT1 and RIT2. Interacts with OOG1. Interacts with TRAF3. Interacts with HRAS. Phosphorylation of Tyr-814 by MET blocks HRAS binding.

The protein localises to the cytoplasm. The protein resides in the nucleus. Its function is as follows. Functions as a guanine nucleotide exchange factor (GEF) activating either RalA or RalB GTPases and plays an important role in intracellular transport. Interacts and acts as an effector molecule for R-Ras, H-Ras, K-Ras, and Rap. During bacterial clearance, recognizes 'Lys-33'-linked polyubiquitinated TRAF3 and subsequently mediates assembly of the exocyst complex. In Homo sapiens (Human), this protein is Ral guanine nucleotide dissociation stimulator (RALGDS).